A 197-amino-acid chain; its full sequence is 3-isopropylmalate dehydratase small subunit (197 aa).

Belongs to the LeuD family. LeuD type 1 subfamily. In terms of assembly, heterodimer of LeuC and LeuD.

The catalysed reaction is (2R,3S)-3-isopropylmalate = (2S)-2-isopropylmalate. It functions in the pathway amino-acid biosynthesis; L-leucine biosynthesis; L-leucine from 3-methyl-2-oxobutanoate: step 2/4. Catalyzes the isomerization between 2-isopropylmalate and 3-isopropylmalate, via the formation of 2-isopropylmaleate. The polypeptide is 3-isopropylmalate dehydratase small subunit (Corynebacterium glutamicum (strain ATCC 13032 / DSM 20300 / JCM 1318 / BCRC 11384 / CCUG 27702 / LMG 3730 / NBRC 12168 / NCIMB 10025 / NRRL B-2784 / 534)).